Here is a 379-residue protein sequence, read N- to C-terminus: Pectin lyase A (379 aa).

Positions 1 to 20 are cleaved as a signal peptide; sequence MKTTFLVSLATAALSSTAAA. 2 disulfide bridges follow: C83-C102 and C92-C226. The active site involves R256. An intrachain disulfide couples C323 to C331.

This sequence belongs to the polysaccharide lyase 1 family.

The protein resides in the secreted. The catalysed reaction is Eliminative cleavage of (1-&gt;4)-alpha-D-galacturonan methyl ester to give oligosaccharides with 4-deoxy-6-O-methyl-alpha-D-galact-4-enuronosyl groups at their non-reducing ends.. Functionally, pectinolytic enzymes consist of four classes of enzymes: pectin lyase, polygalacturonase, pectin methylesterase and rhamnogalacturonase. Among pectinolytic enzymes, pectin lyase is the most important in depolymerization of pectin, since it cleaves internal glycosidic bonds of highly methylated pectins. This Emericella nidulans (strain FGSC A4 / ATCC 38163 / CBS 112.46 / NRRL 194 / M139) (Aspergillus nidulans) protein is Pectin lyase A (pelA).